Consider the following 478-residue polypeptide: Septin-4 (478 aa).

Residues 1–115 (MDRSLGWQGN…RSPWGKLDPY (115 aa)) form a disordered region. A compositionally biased stretch (basic and acidic residues) spans 13–26 (PEDRTEAGIKRFLE). Positions 95–108 (APAPLSPSARPRSP) are enriched in low complexity. 2 positions are modified to phosphoserine: Ser-117 and Ser-118. The region spanning 141–414 (KGFDFTLMVA…ENYRAQCIQS (274 aa)) is the Septin-type G domain. A G1 motif region spans residues 151-158 (GESGLGKS). GTP is bound by residues 151 to 158 (GESGLGKS) and Thr-185. The G3 motif stretch occupies residues 208–211 (DTPG). Residues 289 to 292 (AKAD) are G4 motif. 290-298 (KADTLTPPE) serves as a coordination point for GTP. Ser-325 is subject to Phosphoserine. GTP contacts are provided by Gly-348 and Arg-363. The disordered stretch occupies residues 428–448 (LTRESGTDFPIPAVPPGTDPE). Ser-432 carries the post-translational modification Phosphoserine. Thr-434 is modified (phosphothreonine). A coiled-coil region spans residues 447–478 (PETEKLIREKDEELRRMQEMLHKIQKQMKENY).

It belongs to the TRAFAC class TrmE-Era-EngA-EngB-Septin-like GTPase superfamily. Septin GTPase family. Septins polymerize into heterooligomeric protein complexes that form filaments, and can associate with cellular membranes, actin filaments and microtubules. GTPase activity is required for filament formation. Interacts with SEPTIN8. In a mesenchymal cell line, interacts with SEPTIN9 isoform 2 variants HNA Trp-106 and Phe-111, but not the wild type SEPTIN9. Component of a septin core octameric complex consisting of SEPTIN12, SEPTIN7, SEPTIN6 and SEPTIN2 or SEPTIN4 in the order 12-7-6-2-2-6-7-12 or 12-7-6-4-4-6-7-12. Interacts with SEPTIN14 (via C-terminus). Interacts with DYRK1A. Interacts with SLC6A3/DAT and SNCA/alpha-synuclein. Interacts with STX1A; in the striatum. Interacts with XIAP (via BIR3 domain) following the induction of apoptosis. Interacts with AREL1 (via HECT domain); in the cytoplasm following induction of apoptosis. In terms of assembly, part of a complex composed of SEPTIN4 isoform ARTS, XIAP and BCL2, within the complex interacts with both BCL2 (via BH3 domain) and XIAP, ARTS acts as a scaffold protein and stabilizes the complex. Interacts with XIAP (via BIR3 domain) following the induction of apoptosis. In terms of processing, phosphorylated by DYRK1A. Post-translationally, ubiquitinated by AREL1. As to expression, widely expressed in adult and fetal tissues with highest expression in adult brain (at protein level), heart, liver and adrenal gland and fetal heart, kidney, liver and lung. Expressed in presynaptic terminals of dopaminergic neurons projecting from the substantia nigra pars compacta to the striatum (at protein level). Expressed in axonal varicosities in dopaminergic nerve terminals (at protein level). Expressed in the putamen and in the adjacent cerebral cortex (at protein level). Expressed in colonic crypts (at protein level). Also expressed in colorectal cancers and malignant melanomas. Expressed in platelets. Highly expressed in the brain and heart.

The protein resides in the cytoplasm. Its subcellular location is the cell projection. It is found in the cilium. It localises to the flagellum. The protein localises to the cytoplasmic vesicle. The protein resides in the secretory vesicle. Its subcellular location is the axon. It is found in the dendrite. It localises to the perikaryon. The protein localises to the synapse. The protein resides in the mitochondrion. Its subcellular location is the nucleus. In terms of biological role, filament-forming cytoskeletal GTPase. Pro-apoptotic protein involved in LGR5-positive intestinal stem cell and Paneth cell expansion in the intestines, via its interaction with XIAP. May also play a role in the regulation of cell fate in the intestine. Positive regulator of apoptosis involved in hematopoietic stem cell homeostasis; via its interaction with XIAP. Negative regulator of repair and hair follicle regeneration in response to injury, due to inhibition of hair follicle stem cell proliferation, potentially via its interaction with XIAP. Plays an important role in male fertility and sperm motility. During spermiogenesis, essential for the establishment of the annulus (a fibrous ring structure connecting the midpiece and the principal piece of the sperm flagellum) which is a requisite for the structural and mechanical integrity of the sperm. Involved in the migration of cortical neurons and the formation of neuron leading processes during embryonic development. Required for dopaminergic metabolism in presynaptic autoreceptors; potentially via activity as a presynaptic scaffold protein. Functionally, required for the induction of cell death mediated by TGF-beta and possibly by other apoptotic stimuli. Induces apoptosis through binding and inhibition of XIAP resulting in significant reduction in XIAP levels, leading to caspase activation and cell death. Mediates the interaction between BCL2 and XIAP, thereby positively regulating the ubiquitination and degradation of BCL2 and promoting apoptosis. In Homo sapiens (Human), this protein is Septin-4.